A 157-amino-acid polypeptide reads, in one-letter code: Crossover junction endodeoxyribonuclease RuvC (157 aa).

Active-site residues include Asp-7, Glu-67, and Asp-140. Mg(2+) is bound by residues Asp-7, Glu-67, and Asp-140.

Belongs to the RuvC family. In terms of assembly, homodimer which binds Holliday junction (HJ) DNA. The HJ becomes 2-fold symmetrical on binding to RuvC with unstacked arms; it has a different conformation from HJ DNA in complex with RuvA. In the full resolvosome a probable DNA-RuvA(4)-RuvB(12)-RuvC(2) complex forms which resolves the HJ. It depends on Mg(2+) as a cofactor.

It is found in the cytoplasm. It catalyses the reaction Endonucleolytic cleavage at a junction such as a reciprocal single-stranded crossover between two homologous DNA duplexes (Holliday junction).. The RuvA-RuvB-RuvC complex processes Holliday junction (HJ) DNA during genetic recombination and DNA repair. Endonuclease that resolves HJ intermediates. Cleaves cruciform DNA by making single-stranded nicks across the HJ at symmetrical positions within the homologous arms, yielding a 5'-phosphate and a 3'-hydroxyl group; requires a central core of homology in the junction. The consensus cleavage sequence is 5'-(A/T)TT(C/G)-3'. Cleavage occurs on the 3'-side of the TT dinucleotide at the point of strand exchange. HJ branch migration catalyzed by RuvA-RuvB allows RuvC to scan DNA until it finds its consensus sequence, where it cleaves and resolves the cruciform DNA. This is Crossover junction endodeoxyribonuclease RuvC from Rickettsia rickettsii (strain Iowa).